The following is a 4717-amino-acid chain: Midasin (4717 aa).

6 AAA-ATPase protomer regions span residues 149-384, 458-797, 871-1131, 1157-1448, 1552-1811, and 1858-2106; these read LVQK…FGAF, EQLA…GLRR, EHYI…QEVI, SLKE…NACE, VLRA…EVFD, and VLES…FLLK. ATP is bound by residues 159-166 and 474-481; these read GPEGIGKK and GETGTGKT. A Phosphoserine modification is found at serine 593. ATP is bound by residues 901 to 908, 1193 to 1200, 1566 to 1573, and 1876 to 1883; these read GPTSSGKT, GDTGCGKT, GSPGVGKT, and GDTATGKT. The segment at 2173 to 3925 is linker; the sequence is KLLRKVLLTN…SGVGAEDITN (1753 aa). Disordered stretches follow at residues 3898-3924, 3936-4283, and 4295-4365; these read PQEGKSNSGELESGTGLGSGVGAEDIT, LANE…LGDH, and EWED…EVGD. 2 stretches are compositionally biased toward acidic residues: residues 3936–3950 and 3973–3993; these read LANEEDTANQSDLDE and ENSDSEEENQDLDEEVNDIPE. Over residues 4020 to 4030 the composition is skewed to polar residues; the sequence is NEQSAANNESD. A compositionally biased stretch (basic and acidic residues) spans 4031–4049; sequence LVSKEDDNKALEDKDRQEK. Acidic residues predominate over residues 4050–4066; the sequence is EDEEEMSDDVGIDDEIQ. The span at 4080 to 4103 shows a compositional bias: basic and acidic residues; the sequence is NEDHLDLPEDLKLDEKEGDVSKDS. 3 stretches are compositionally biased toward acidic residues: residues 4104–4177, 4184–4196, and 4226–4236; these read DLED…ESTE, EELEQGEVPEDQA, and ENEELGEEDGA. 2 stretches are compositionally biased toward basic and acidic residues: residues 4258–4275 and 4329–4342; these read QKGEDTSTPKEAMSEADR and AEKDQIKSIDRDES. Residues 4343 to 4355 are compositionally biased toward polar residues; that stretch reads ANQNPDSMNSTNI. The region spanning 4505–4707 is the VWFA domain; the sequence is QVMISIDDSK…ELPQLLSSAL (203 aa).

This sequence belongs to the midasin family. Associates with pre-60S ribosomes in the nucleoplasm.

Its subcellular location is the nucleus. The protein localises to the nucleolus. The protein resides in the nucleoplasm. Its function is as follows. Nuclear chaperone required for maturation and nuclear export of pre-60S ribosome subunits. Functions at successive maturation steps to remove ribosomal factors at critical transition points, first driving the exit of early pre-60S particles from the nucleolus and then driving late pre-60S particles from the nucleus. This Schizosaccharomyces pombe (strain 972 / ATCC 24843) (Fission yeast) protein is Midasin (mdn1).